We begin with the raw amino-acid sequence, 470 residues long: Peripherin (470 aa).

The head stretch occupies residues 1–99 (MSHHPSGLRA…FLATRSNEKQ (99 aa)). A 3'-nitrotyrosine modification is found at Y17. Phosphoserine occurs at positions 28, 50, and 59. One can recognise an IF rod domain in the interval 97-407 (EKQELQELND…KLLEGEESRI (311 aa)). The segment at 100 to 132 (ELQELNDRFANFIEKVRFLEQQNAALRGELSQA) is coil 1A. The tract at residues 133 to 143 (RGQEPARADQL) is linker 1. The tract at residues 144-239 (CQQELRELRR…KLHEEELRDL (96 aa)) is coil 1B. Residues 240 to 262 (QVSVESQQVQQVEVEATVKPELT) form a linker 2 region. Positions 263-405 (AALRDIRAQY…YRKLLEGEES (143 aa)) are coil 2. Residue Y379 is modified to 3'-nitrotyrosine. The interval 406 to 470 (RISVPVHSFA…ELDKSSAHSY (65 aa)) is tail. A disordered region spans residues 447–470 (NGEVVTESQKEQRSELDKSSAHSY). The span at 454–470 (SQKEQRSELDKSSAHSY) shows a compositional bias: basic and acidic residues. Y470 bears the Phosphotyrosine mark.

Belongs to the intermediate filament family. As to quaternary structure, forms homodimers (in vitro). Homopolymerizes into a filamentous network (in vitro). Forms heterodimers with NEFL, NEFM or NEFH (in vitro). Interacts with DST (via C-terminus). Interacts with RAB7A; the interaction is direct. Interacts with PRKCE (via phorbol-ester/DAG-type 2 domain). Post-translationally, phosphorylated; phosphorylation increases after nerve injury in regenerating neurons. In terms of tissue distribution, expressed in the neurons of the outer hair cells in the organ of Corti and to a lesser extent in type I spiral ganglion cells.

The protein localises to the cytoplasm. Its subcellular location is the cytoskeleton. The protein resides in the cell projection. It is found in the axon. It localises to the perikaryon. Its function is as follows. Class-III neuronal intermediate filament protein. May form an independent structural network without the involvement of other neurofilaments or may cooperate with the neuronal intermediate filament proteins NEFL, NEFH, NEFM and INA to form a filamentous network. Assembly of the neuronal intermediate filaments may be regulated by RAB7A. Plays a role in the development of unmyelinated sensory neurons. May be involved in axon elongation and axon regeneration after injury. Inhibits neurite extension in type II spiral ganglion neurons in the cochlea. The sequence is that of Peripherin (PRPH) from Homo sapiens (Human).